We begin with the raw amino-acid sequence, 618 residues long: Carbamoyl phosphate synthase large chain, C-terminal section (618 aa).

Positions 1-78 (MDMEKLKEIL…ETFVYKEQDE (78 aa)) are oligomerization domain. Residues 79-477 (SNPSDRKKVI…YKAQLSANME (399 aa)) are carbamoyl phosphate synthetic domain. The 192-residue stretch at 208-399 (SKLLKKLNIP…LAKLATKIML (192 aa)) folds into the ATP-grasp domain. ATP-binding residues include Arg244, Lys283, Leu285, Glu290, Gly315, Val316, His317, Ser318, Gln358, and Glu370. Residues Gln358, Glu370, and Asn372 each coordinate Mg(2+). The Mn(2+) site is built by Gln358, Glu370, and Asn372. In terms of domain architecture, MGS-like spans 476–618 (MELPIVGNVF…ELDARIKNRF (143 aa)). An allosteric domain region spans residues 478-618 (LPIVGNVFIS…ELDARIKNRF (141 aa)).

Belongs to the CarB family. In terms of assembly, composed of two chains; the small (or glutamine) chain promotes the hydrolysis of glutamine to ammonia, which is used by the large (or ammonia) chain to synthesize carbamoyl phosphate. Tetramer of heterodimers (alpha,beta)4. The cofactor is Mg(2+). Mn(2+) is required as a cofactor.

It catalyses the reaction hydrogencarbonate + L-glutamine + 2 ATP + H2O = carbamoyl phosphate + L-glutamate + 2 ADP + phosphate + 2 H(+). It carries out the reaction hydrogencarbonate + NH4(+) + 2 ATP = carbamoyl phosphate + 2 ADP + phosphate + 2 H(+). Its pathway is amino-acid biosynthesis; L-arginine biosynthesis; carbamoyl phosphate from bicarbonate: step 1/1. It functions in the pathway pyrimidine metabolism; UMP biosynthesis via de novo pathway; (S)-dihydroorotate from bicarbonate: step 1/3. Its function is as follows. Large subunit of the glutamine-dependent carbamoyl phosphate synthetase (CPSase). CPSase catalyzes the formation of carbamoyl phosphate from the ammonia moiety of glutamine, carbonate, and phosphate donated by ATP, constituting the first step of 2 biosynthetic pathways, one leading to arginine and/or urea and the other to pyrimidine nucleotides. The large subunit (synthetase) binds the substrates ammonia (free or transferred from glutamine from the small subunit), hydrogencarbonate and ATP and carries out an ATP-coupled ligase reaction, activating hydrogencarbonate by forming carboxy phosphate which reacts with ammonia to form carbamoyl phosphate. The polypeptide is Carbamoyl phosphate synthase large chain, C-terminal section (carB2) (Methanocaldococcus jannaschii (strain ATCC 43067 / DSM 2661 / JAL-1 / JCM 10045 / NBRC 100440) (Methanococcus jannaschii)).